Reading from the N-terminus, the 244-residue chain is Geranylgeranylglyceryl phosphate synthase (244 aa).

Residues Asp-20 and Ser-49 each contribute to the Mg(2+) site. Residues Tyr-169–Gly-175, Gly-200–Gly-201, and Gly-222–Thr-223 contribute to the sn-glycerol 1-phosphate site.

It belongs to the GGGP/HepGP synthase family. Group II subfamily. Mg(2+) is required as a cofactor.

The protein localises to the cytoplasm. It carries out the reaction sn-glycerol 1-phosphate + (2E,6E,10E)-geranylgeranyl diphosphate = sn-3-O-(geranylgeranyl)glycerol 1-phosphate + diphosphate. The protein operates within membrane lipid metabolism; glycerophospholipid metabolism. Prenyltransferase that catalyzes the transfer of the geranylgeranyl moiety of geranylgeranyl diphosphate (GGPP) to the C3 hydroxyl of sn-glycerol-1-phosphate (G1P). This reaction is the first ether-bond-formation step in the biosynthesis of archaeal membrane lipids. This chain is Geranylgeranylglyceryl phosphate synthase, found in Korarchaeum cryptofilum (strain OPF8).